The chain runs to 78 residues: MPKKVFCGTVTKAKCDKTVKVSVLQVYKDELYKKVIKKYKKYTAHDENNSCKEGDKVLIQEHKPISTTKKWVIVNSSH.

The protein belongs to the universal ribosomal protein uS17 family. Part of the 30S ribosomal subunit.

One of the primary rRNA binding proteins, it binds specifically to the 5'-end of 16S ribosomal RNA. This chain is Small ribosomal subunit protein uS17, found in Wolbachia pipientis wMel.